The sequence spans 299 residues: Maintenance of mitochondrial morphology protein 1 (299 aa).

Topologically, residues 1 to 15 (MTNIIFSLQPTFTQG) are lumenal. Residues 16 to 36 (LILGQLSVLVLLGLILKYLFL) form a helical membrane-spanning segment. Over 37–299 (DSTKNPFETT…QEESKRQEEA (263 aa)) the chain is Cytoplasmic. Positions 47–68 (SYHPQFDRKPARKQQAQDSQSQ) are disordered. Residues 73–281 (DVESLDWFNL…LPGLASVAEA (209 aa)) form the SMP-LTD domain.

The protein belongs to the MMM1 family. As to quaternary structure, homodimer. Component of the ER-mitochondria encounter structure (ERMES) or MDM complex, composed of MMM1, MDM10, MDM12 and MDM34. An MMM1 homodimer associates with one molecule of MDM12 on each side in a pairwise head-to-tail manner, and the SMP-LTD domains of MMM1 and MDM12 generate a continuous hydrophobic tunnel for phospholipid trafficking.

It is found in the endoplasmic reticulum membrane. Its function is as follows. Component of the ERMES/MDM complex, which serves as a molecular tether to connect the endoplasmic reticulum (ER) and mitochondria. Components of this complex are involved in the control of mitochondrial shape and protein biogenesis, and function in nonvesicular lipid trafficking between the ER and mitochondria. The MDM12-MMM1 subcomplex functions in the major beta-barrel assembly pathway that is responsible for biogenesis of all outer membrane beta-barrel proteins, and acts in a late step after the SAM complex. The MDM10-MDM12-MMM1 subcomplex further acts in the TOM40-specific pathway after the action of the MDM12-MMM1 complex. Essential for establishing and maintaining the structure of mitochondria and maintenance of mtDNA nucleoids. In Coprinopsis cinerea (strain Okayama-7 / 130 / ATCC MYA-4618 / FGSC 9003) (Inky cap fungus), this protein is Maintenance of mitochondrial morphology protein 1.